The sequence spans 853 residues: Bromodomain-containing protein bet-1 (853 aa).

Polar residues predominate over residues 1 to 19 (MSEGSGDQSQQRPWASPRQ). Disordered stretches follow at residues 1–22 (MSEG…QQPI) and 141–245 (SLEQ…LRAK). A Bromo 1 domain is found at 39-145 (RHTNKLDYIM…EVIKKSLEQA (107 aa)). Residues 141-153 (SLEQAPREEHDMD) are compositionally biased toward basic and acidic residues. Low complexity-rich tracts occupy residues 166–175 (SDGGSKSSSS) and 192–215 (SEVS…SVAA). K252 is covalently cross-linked (Glycyl lysine isopeptide (Lys-Gly) (interchain with G-Cter in SUMO)). Positions 257–366 (QPLLPSMKPC…EVFDRRWAEL (110 aa)) constitute a Bromo 2 domain. Positions 369 to 381 (SSSRASSVAPQSA) are enriched in low complexity. The disordered stretch occupies residues 369–418 (SSSRASSVAPQSAPIAPTPKVAKSSAPKEPKESRKEHKKETTFEASGAKS). A compositionally biased stretch (basic and acidic residues) spans 394–410 (APKEPKESRKEHKKETT). The stretch at 419 to 458 (EDLMQINNALSMIREREEKLKAELAAAQAIKDKLTSVKNR) forms a coiled coil. The region spanning 516–601 (DSDDEDNKMA…TIPTLNGNGD (86 aa)) is the NET domain. Disordered regions lie at residues 594 to 814 (PTLN…DEQT) and 819 to 838 (MRME…VSLS). A compositionally biased stretch (low complexity) spans 612–624 (TSSGATGSKGSSS). A compositionally biased stretch (polar residues) spans 684 to 696 (QPPSTSREWNQSS). A compositionally biased stretch (low complexity) spans 708-736 (QPPMSRVPASSSTSVSAIGKNNAAASSNS). The span at 786–807 (QFFQSQPTTSATIRSPTESQPG) shows a compositional bias: polar residues. Residues 819-832 (MRMEAKRARQKEDE) are compositionally biased toward basic and acidic residues.

This sequence belongs to the BET family. As to quaternary structure, interacts with acetylated histone H4. Interacts (via BROMO domain 2) with smo-1 and ubc-9. As to expression, expressed in T-cells, Q-cells, V5-cells and their descendants such as somatic gonad and syncytium.

It localises to the nucleus. The protein localises to the chromosome. In terms of biological role, required for the establishment and maintenance of stable cell fate in several lineages including V5.pa, T, Z1/Z4 and QR lineages probably by repressing the expression of cell fate determinants. Required to maintain non-distal tip cell (DTC) fate of somatic gonadal cells through the htz-1-mediated repression of transcription factor ceh-22. Regulates the subnuclear localization of histone variant htz-1 in somatic gonadal cells. Plays a role in the attenuation of the let-60/ras pathway, probably by preventing expression of activators of the pathway. Involved in adult locomotion. Acts together with the sumoylation pathway to prevent muscle myosin depletion in aging adults probably by preventing myoblast growth factor receptor egl-15 overexpression. May play a role in vulva development. The chain is Bromodomain-containing protein bet-1 from Caenorhabditis elegans.